Here is a 320-residue protein sequence, read N- to C-terminus: MAFPKKKLQGLVAATITPMTEDGEINFSVIGQYVDYLVKEQGVKNIFVNGTTGEGLSLSISERRQVAEEWVTKGKDKLDQVIIHVGALSLKESQELAQHAAEIGADGIAVIAPFFLKPWTKDILINFLKEVAAAAPALPFYYYHIPALTGVKIRAEELLDGILDKIPTFQGLKFSDTDLLDFGQCVDQNRQQQFAFLFGVDEQLLSALVMGATGAVGSTYNYLGKKTNQMLEAFERKDFSLALNYQFCIQRFINFVVKLGFGVSQTKAIMTLVSGISMGPPRLPLQKASREFTDSAEAKLKSLDFLSFTDLKDGNLEAGS.

Positions 51 and 52 each coordinate aceneuramate. Catalysis depends on Y143, which acts as the Proton donor. The Schiff-base intermediate with substrate role is filled by K173. Aceneuramate is bound by residues S175, G199, D201, E202, and S218.

The protein belongs to the DapA family. NanA subfamily. Homotetramer.

The protein resides in the cytoplasm. The enzyme catalyses aceneuramate = aldehydo-N-acetyl-D-mannosamine + pyruvate. It functions in the pathway amino-sugar metabolism; N-acetylneuraminate degradation. In terms of biological role, catalyzes the cleavage of N-acetylneuraminic acid (sialic acid) to form pyruvate and N-acetylmannosamine via a Schiff base intermediate. It prevents sialic acids from being recycled and returning to the cell surface. Involved in the N-glycolylneuraminic acid (Neu5Gc) degradation pathway. The chain is N-acetylneuraminate lyase from Pongo abelii (Sumatran orangutan).